Here is a 569-residue protein sequence, read N- to C-terminus: Aspartate--tRNA ligase, cytoplasmic 2 (569 aa).

Positions 1–23 are disordered; sequence MSEENNHKEKSKNEIKKEKKKIE. The tract at residues 292-295 is aspartate; sequence QFYR. Residue Arg-314 participates in L-aspartate binding. Residues 314-316 and 322-324 contribute to the ATP site; these read RTD and RHL. The L-aspartate site is built by Ser-475 and Arg-479. Residue 540-543 participates in ATP binding; that stretch reads GLER.

Belongs to the class-II aminoacyl-tRNA synthetase family. Type 2 subfamily.

It is found in the cytoplasm. The catalysed reaction is tRNA(Asp) + L-aspartate + ATP = L-aspartyl-tRNA(Asp) + AMP + diphosphate. The sequence is that of Aspartate--tRNA ligase, cytoplasmic 2 (aspS2) from Dictyostelium discoideum (Social amoeba).